Reading from the N-terminus, the 241-residue chain is Uridylate kinase (241 aa).

ATP is bound at residue 9–10 (GS). Glycine 44 is a UMP binding site. Positions 45 and 49 each coordinate ATP. Residues aspartate 66 and 114-120 (IMPGQTT) contribute to the UMP site. Positions 140, 146, and 149 each coordinate ATP.

Belongs to the UMP kinase family. In terms of assembly, homohexamer.

The protein localises to the cytoplasm. The catalysed reaction is UMP + ATP = UDP + ADP. It participates in pyrimidine metabolism; CTP biosynthesis via de novo pathway; UDP from UMP (UMPK route): step 1/1. Inhibited by UTP. Catalyzes the reversible phosphorylation of UMP to UDP. This is Uridylate kinase from Haloquadratum walsbyi (strain DSM 16790 / HBSQ001).